Here is a 310-residue protein sequence, read N- to C-terminus: Ferredoxin--NADP reductase (310 aa).

The FAD site is built by Asp26, Gln34, Tyr39, Val78, Phe108, Asp268, and Thr308.

It belongs to the ferredoxin--NADP reductase type 2 family. Homodimer. Requires FAD as cofactor.

The enzyme catalyses 2 reduced [2Fe-2S]-[ferredoxin] + NADP(+) + H(+) = 2 oxidized [2Fe-2S]-[ferredoxin] + NADPH. This chain is Ferredoxin--NADP reductase, found in Lactobacillus helveticus (strain DPC 4571).